The chain runs to 309 residues: Porphobilinogen deaminase (309 aa).

Cys-243 is modified (S-(dipyrrolylmethanemethyl)cysteine).

It belongs to the HMBS family. In terms of assembly, monomer. Requires dipyrromethane as cofactor.

The enzyme catalyses 4 porphobilinogen + H2O = hydroxymethylbilane + 4 NH4(+). It participates in porphyrin-containing compound metabolism; protoporphyrin-IX biosynthesis; coproporphyrinogen-III from 5-aminolevulinate: step 2/4. Functionally, tetrapolymerization of the monopyrrole PBG into the hydroxymethylbilane pre-uroporphyrinogen in several discrete steps. In Deinococcus radiodurans (strain ATCC 13939 / DSM 20539 / JCM 16871 / CCUG 27074 / LMG 4051 / NBRC 15346 / NCIMB 9279 / VKM B-1422 / R1), this protein is Porphobilinogen deaminase (hemC).